The following is a 136-amino-acid chain: Ribosome-binding factor A (136 aa).

It belongs to the RbfA family. As to quaternary structure, monomer. Binds 30S ribosomal subunits, but not 50S ribosomal subunits or 70S ribosomes.

Its subcellular location is the cytoplasm. Its function is as follows. One of several proteins that assist in the late maturation steps of the functional core of the 30S ribosomal subunit. Associates with free 30S ribosomal subunits (but not with 30S subunits that are part of 70S ribosomes or polysomes). Required for efficient processing of 16S rRNA. May interact with the 5'-terminal helix region of 16S rRNA. This is Ribosome-binding factor A from Rhizobium etli (strain ATCC 51251 / DSM 11541 / JCM 21823 / NBRC 15573 / CFN 42).